The sequence spans 406 residues: 8-amino-7-oxononanoate synthase (406 aa).

Arginine 21 provides a ligand contact to substrate. 112-113 (GY) is a binding site for pyridoxal 5'-phosphate. Substrate is bound at residue histidine 137. Pyridoxal 5'-phosphate-binding residues include serine 183, histidine 211, and threonine 239. Lysine 242 carries the N6-(pyridoxal phosphate)lysine modification. Position 358 (threonine 358) interacts with substrate.

Belongs to the class-II pyridoxal-phosphate-dependent aminotransferase family. BioF subfamily. In terms of assembly, homodimer. Requires pyridoxal 5'-phosphate as cofactor.

The enzyme catalyses 6-carboxyhexanoyl-[ACP] + L-alanine + H(+) = (8S)-8-amino-7-oxononanoate + holo-[ACP] + CO2. It functions in the pathway cofactor biosynthesis; biotin biosynthesis. Functionally, catalyzes the decarboxylative condensation of pimeloyl-[acyl-carrier protein] and L-alanine to produce 8-amino-7-oxononanoate (AON), [acyl-carrier protein], and carbon dioxide. The protein is 8-amino-7-oxononanoate synthase of Burkholderia cenocepacia (strain HI2424).